The following is a 952-amino-acid chain: Bromodomain testis-specific protein (952 aa).

The Bromo 1 domain maps to 26–132 (RLTNQLQFLQ…KLFMQKLSQM (107 aa)). Positions 141–150 (GKERMKKDIQ) are enriched in basic and acidic residues. The tract at residues 141–168 (GKERMKKDIQQKTAVSSAKEQTPSKSAE) is disordered. Positions 151 to 167 (QKTAVSSAKEQTPSKSA) are enriched in polar residues. Ser-186 is subject to Phosphoserine. The Nuclear localization signal signature appears at 208–219 (KGVKRRADTTTP). A disordered region spans residues 209–257 (GVKRRADTTTPTTSSAKASSESPPPLREAKPANAPVKENTVKSVLPDSQ). A compositionally biased stretch (low complexity) spans 216 to 229 (TTTPTTSSAKASSE). The Bromo 2 domain maps to 266-375 (VKVTEQLKHC…DVFEMHFAKI (110 aa)). Disordered stretches follow at residues 392 to 420 (SAKALSRESSSEASSGDCSSEDSEDERVQ), 442 to 504 (VPLR…NAKP), 607 to 746 (QLNC…GCQV), and 850 to 930 (KHLE…RREA). Positions 417 to 442 (ERVQRLAKLQEQLNAVHQQLQVLSQV) form a coiled coil. A compositionally biased stretch (basic residues) spans 445–463 (RKLKKKNEKSKRAPKRKKV). Residues 495–577 (KLEEEDNAKP…ACLRKRSLKP (83 aa)) enclose the NET domain. A compositionally biased stretch (basic residues) spans 610-619 (CRKRQTKRPA). Over residues 625–638 (PRPPLPPPPPPPPE) the composition is skewed to pro residues. A compositionally biased stretch (low complexity) spans 646–681 (SDSSSSSSSSGSGSSSSSSSSSGSGSSSSDSSSSDS). A compositionally biased stretch (polar residues) spans 718 to 729 (SAETALVQQSTG). Residues 837–936 (EKEVKARTQE…RREAMAGTID (100 aa)) are a coiled coil. The segment covering 850–867 (KHLEHSAKDPKVSQESQR) has biased composition (basic and acidic residues). Polar residues predominate over residues 874–883 (TPESSSNKVQ). The segment covering 893–902 (EQQQLPSPSE) has biased composition (low complexity). Residues 911 to 930 (LLKDRNLAREKEQERRRREA) show a composition bias toward basic and acidic residues.

This sequence belongs to the BET family. As to quaternary structure, interacts with the acetylated N-terminus of histone H1, H2, H3 and H4. Interacts with P-TEFb components CDK9 and CCNT1/cyclin-T1. Interacts with mRNA splicing machinery proteins SRSF2, DDX5, HNRNPK and TARDBP. Interacts with SMARCE1. In terms of processing, ubiquitinated in a SPOP-dependent manner, leading to proteasomal degradation.

Its subcellular location is the nucleus. In terms of biological role, testis-specific chromatin protein that specifically binds histone H4 acetylated at 'Lys-5' and 'Lys-8' (H4K5ac and H4K8ac, respectively) and plays a key role in spermatogenesis. Required in late pachytene spermatocytes: plays a role in meiotic and post-meiotic cells by binding to acetylated histones at the promoter of specific meiotic and post-meiotic genes, facilitating their activation at the appropriate time. In the post-meiotic phase of spermatogenesis, binds to hyperacetylated histones and participates in their general removal from DNA. Also recognizes and binds a subset of butyrylated histones: able to bind histone H4 butyrylated at 'Lys-8' (H4K8ac), while it is not able to bind H4 butyrylated at 'Lys-5' (H4K5ac). Also acts as a component of the splicing machinery in pachytene spermatocytes and round spermatids and participates in 3'-UTR truncation of specific mRNAs in post-meiotic spermatids. Required for chromocenter organization, a structure comprised of peri-centromeric heterochromatin. The protein is Bromodomain testis-specific protein (Brdt) of Rattus norvegicus (Rat).